A 273-amino-acid polypeptide reads, in one-letter code: Undecaprenyl-diphosphatase (273 aa).

A run of 8 helical transmembrane segments spans residues 3 to 23 (IILW…EFLP), 47 to 67 (ALDA…WQDI), 90 to 110 (LLLG…LLKL), 120 to 140 (IIAT…QWGS), 148 to 168 (IGIL…LPGA), 186 to 206 (PTAA…ATLV), 217 to 237 (LLIP…LAIA), and 249 to 269 (WVFI…IALG).

This sequence belongs to the UppP family.

Its subcellular location is the cell inner membrane. It catalyses the reaction di-trans,octa-cis-undecaprenyl diphosphate + H2O = di-trans,octa-cis-undecaprenyl phosphate + phosphate + H(+). Functionally, catalyzes the dephosphorylation of undecaprenyl diphosphate (UPP). Confers resistance to bacitracin. The polypeptide is Undecaprenyl-diphosphatase (Thermosynechococcus vestitus (strain NIES-2133 / IAM M-273 / BP-1)).